Consider the following 452-residue polypeptide: Phosphoglucosamine mutase (452 aa).

Serine 108 serves as the catalytic Phosphoserine intermediate. Mg(2+) is bound by residues serine 108, aspartate 247, aspartate 249, and aspartate 251. At serine 108 the chain carries Phosphoserine.

This sequence belongs to the phosphohexose mutase family. Mg(2+) is required as a cofactor. In terms of processing, activated by phosphorylation.

It catalyses the reaction alpha-D-glucosamine 1-phosphate = D-glucosamine 6-phosphate. Catalyzes the conversion of glucosamine-6-phosphate to glucosamine-1-phosphate. This Burkholderia thailandensis (strain ATCC 700388 / DSM 13276 / CCUG 48851 / CIP 106301 / E264) protein is Phosphoglucosamine mutase.